The primary structure comprises 554 residues: Sesquiterpene synthase 14a (554 aa).

The Mg(2+) site is built by Asp-305, Asp-309, Asp-449, and Glu-457. A DDXXD motif motif is present at residues 305–309 (DDLYD).

The protein belongs to the terpene synthase family. Tpsa subfamily. The cofactor is Mg(2+). Requires Mn(2+) as cofactor. As to expression, mostly expressed in stem trichomes.

It carries out the reaction (2E,6E)-farnesyl diphosphate = beta-bisabolene + diphosphate. It catalyses the reaction (2E,6E)-farnesyl diphosphate = (Z)-alpha-bisabolene + diphosphate. The catalysed reaction is (2E,6E)-farnesyl diphosphate = beta-acoradiene + diphosphate. The enzyme catalyses (2E,6E)-farnesyl diphosphate = (E)-gamma-bisabolene + diphosphate. It carries out the reaction (2E,6E)-farnesyl diphosphate = (E)-beta-farnesene + diphosphate. It catalyses the reaction (2E,6E)-farnesyl diphosphate = (Z)-beta-farnesene + diphosphate. The catalysed reaction is (2E)-geranyl diphosphate = limonene + diphosphate. The enzyme catalyses (2E)-geranyl diphosphate = beta-myrcene + diphosphate. Its pathway is secondary metabolite biosynthesis; terpenoid biosynthesis. Its function is as follows. Sesquiterpene synthase involved in the biosynthesis of volatile compounds. Mediates the conversion of (2E,6E)-farnesyl diphosphate ((EE)-FPP) into beta-bisabolene, beta-farnesene, (E)-gamma-bisabolene, beta-acoradiene, selinene and (Z)-alpha-bisabolene. Low or no activity with (2Z,6Z)-farnesyl diphosphate ((ZZ)-FPP). Can act with a low efficiency as a monoterpene synthase with geranyl diphosphate (GPP) as substrate, thus producing beta-myrcene and limonene. The chain is Sesquiterpene synthase 14a from Solanum habrochaites (Wild tomato).